Reading from the N-terminus, the 877-residue chain is Leucine--tRNA ligase (877 aa).

Positions 48–58 match the 'HIGH' region motif; sequence PYPSGKLHMGH. The 'KMSKS' region signature appears at 636–640; that stretch reads KMSKS. Lys639 lines the ATP pocket.

This sequence belongs to the class-I aminoacyl-tRNA synthetase family.

The protein localises to the cytoplasm. It carries out the reaction tRNA(Leu) + L-leucine + ATP = L-leucyl-tRNA(Leu) + AMP + diphosphate. The sequence is that of Leucine--tRNA ligase from Ralstonia pickettii (strain 12J).